Here is a 364-residue protein sequence, read N- to C-terminus: tRNA 2-selenouridine synthase (364 aa).

The Rhodanese domain maps to 14–137 (LLADTPLIDV…LRQTAIQATW (124 aa)). The S-selanylcysteine intermediate role is filled by cysteine 97.

This sequence belongs to the SelU family. Monomer.

The catalysed reaction is 5-methylaminomethyl-2-thiouridine(34) in tRNA + selenophosphate + (2E)-geranyl diphosphate + H2O + H(+) = 5-methylaminomethyl-2-selenouridine(34) in tRNA + (2E)-thiogeraniol + phosphate + diphosphate. It catalyses the reaction 5-methylaminomethyl-2-thiouridine(34) in tRNA + (2E)-geranyl diphosphate = 5-methylaminomethyl-S-(2E)-geranyl-thiouridine(34) in tRNA + diphosphate. It carries out the reaction 5-methylaminomethyl-S-(2E)-geranyl-thiouridine(34) in tRNA + selenophosphate + H(+) = 5-methylaminomethyl-2-(Se-phospho)selenouridine(34) in tRNA + (2E)-thiogeraniol. The enzyme catalyses 5-methylaminomethyl-2-(Se-phospho)selenouridine(34) in tRNA + H2O = 5-methylaminomethyl-2-selenouridine(34) in tRNA + phosphate. Involved in the post-transcriptional modification of the uridine at the wobble position (U34) of tRNA(Lys), tRNA(Glu) and tRNA(Gln). Catalyzes the conversion of 2-thiouridine (S2U-RNA) to 2-selenouridine (Se2U-RNA). Acts in a two-step process involving geranylation of 2-thiouridine (S2U) to S-geranyl-2-thiouridine (geS2U) and subsequent selenation of the latter derivative to 2-selenouridine (Se2U) in the tRNA chain. This is tRNA 2-selenouridine synthase from Salmonella agona (strain SL483).